The following is a 1396-amino-acid chain: Probable ATP-dependent RNA helicase spindle-E (1396 aa).

The tract at residues 1-34 is disordered; that stretch reads MDEAAGPSTSRTSNLEDVDDEGASLAEEDEEHTK. The span at 16-30 shows a compositional bias: acidic residues; the sequence is EDVDDEGASLAEEDE. Positions 68–234 constitute a Helicase ATP-binding domain; sequence LDKIRSNAVV…FKIPKKSGYL (167 aa). 81 to 88 is a binding site for ATP; the sequence is GATGCGKT. The short motif at 180-183 is the DEAH box element; sequence DEVH. The Helicase C-terminal domain maps to 292–468; it reads KGQEFGDSLE…TVVLKAKLLE (177 aa). The 66-residue stretch at 885 to 950 folds into the Tudor domain; sequence NFAMGQMVAA…RQLDDSLGQL (66 aa).

This sequence belongs to the DEAD box helicase family. DEAH subfamily.

The protein resides in the cytoplasm. It carries out the reaction ATP + H2O = ADP + phosphate + H(+). Probable ATP-binding RNA helicase which plays a central role during gametogenesis by repressing transposable elements and preventing their mobilization, which is essential for the germline integrity. Acts via the piRNA metabolic process, which mediates the repression of transposable elements during meiosis by forming complexes composed of piRNAs and Piwi proteins and govern the methylation and subsequent repression of transposons. In Culex quinquefasciatus (Southern house mosquito), this protein is Probable ATP-dependent RNA helicase spindle-E (spn-E).